Here is a 383-residue protein sequence, read N- to C-terminus: S-adenosylmethionine synthase (383 aa).

H15 contributes to the ATP binding site. A Mg(2+)-binding site is contributed by D17. K(+) is bound at residue E43. E56 and Q99 together coordinate L-methionine. The flexible loop stretch occupies residues 99–109 (QSPDINQGVDR). Residues 164-166 (DAK), 230-231 (RF), D239, 245-246 (RK), A262, and K266 each bind ATP. D239 serves as a coordination point for L-methionine. K270 is an L-methionine binding site.

The protein belongs to the AdoMet synthase family. As to quaternary structure, homotetramer; dimer of dimers. Mg(2+) serves as cofactor. Requires K(+) as cofactor.

It localises to the cytoplasm. The catalysed reaction is L-methionine + ATP + H2O = S-adenosyl-L-methionine + phosphate + diphosphate. It participates in amino-acid biosynthesis; S-adenosyl-L-methionine biosynthesis; S-adenosyl-L-methionine from L-methionine: step 1/1. Its function is as follows. Catalyzes the formation of S-adenosylmethionine (AdoMet) from methionine and ATP. The overall synthetic reaction is composed of two sequential steps, AdoMet formation and the subsequent tripolyphosphate hydrolysis which occurs prior to release of AdoMet from the enzyme. This Actinobacillus pleuropneumoniae serotype 7 (strain AP76) protein is S-adenosylmethionine synthase.